Here is a 1576-residue protein sequence, read N- to C-terminus: MAKKKKDTKHTRLCEATGAWATKVLEDFRASGNDSYVFEQQLTNSERGIIHQMCRTMGLRSKSNGSGEERRLSLFKGDGISKSDKRRMYEARNQKEKEGDGISKSYSKHRYETRFQKAGGIRKTRISPKKLKCVSFPPEAKAVLHDLFTRYPPCDGDTTGTSLGIYTTGNVNSNWKDDFFKKPHMTKHDIENNVVSLSSRLKKERHFREIFEARSKLPIASFRDAIISAVESNQVVLIAGETGCGKTTQVPQYLLDHMWHSKKEACKIICTQPRRISAISVSDRISWERGETIGRTVGYKVRLQSEGGRESSVVFCTNGILLRVLIGKGVNSSVPDITHIIVDEIHERDSYSDFMLMILRDLLPSNPHLRLILMSATLDAERFSEYFGGCPVVRVPGFTYPVRTFFLDDALSVLNSDKNSHLLSAVKRDFKDEDKVSLDEAIDLAWTNDEFDCLVDLVSSEGSHEAYNYQNSTTGLTPLMVFAGKGRVSDVCKLLSVGADCTLKSKEGITALELAEKENQFETAQIIREHAGNIQSNSQQAQDLLDKYMATIKPEEVDVGLIVKLMKKICSDSKDGAILVFLPGWEEISKTKEKLLDDRFFAHSAKFIILCLHSRVPAEEQKKVFNRPPRGCRKIVLATNIAESAVTIDDVVYVIDSGRMKEKSYDPYNDVSTLQSSWVSKANAKQRAGRAGRCQAGICYHLYSKLRAASLPEYRVPEVMRMPVDELCLQVKMLDPNCNVNDFLQKLMDPPVAQSIENALIILKDIGALTPEEELTELGQKFGQLPVHPRISKMIYFAILVNCLDPALILACAADEKDPFTMPLSPGDRKKAAAAKHELASLYGDHSDHLATVAAFQCWKNAKASGQAKEFCSKYFISQVVMKRLDDLCRKLQGELNRHGVIPSSSSNCSLNAHDPGILRAVIAVGLYPMLGRMCPLSKNRTRSVIETIAGAKVRVPSLSNNVDMSSTKFDEALIVFDEITRGDWGVVIRSCTVLPTIPVLLFSREIAVSTTESYDAVKSDDEEDHKVGNVGDAMDIDKEVGRPGEKIMLGPENSVKVVVDRWLPFKVTAFEIAQMYILRERLMASILFKVKHPKENLPPHLGASMYAIASVLSYDSLAQSSVQTVAVQPITSVVDATSPRDDIPSTNPNELREHDPNTTPMGSKLELANKLGLGNMEESLPSNFADGNEQPDPNTSPVEDVSAATKQKKMQSESKRCKSLNNVDLGNIEENFGNMEENPPSDLAIGNEQTLPKLASNLDMGNMEENTPSDLANGNEKTEPNSANSMDLGNMEENTPSDLANGNKKKEPKSVSKLDLGSEKVSIPSNLVNGNEQHDLNIAPGEDASAAKQPEKKRSRSKKRKSGNNLDLGKMEKSKPSDLANENEQTEPKSANNLDLGNMKENTPSDLANENEQTELRLPNNSDYGNMEESLPLNLANGDEQPDPTTAPMEAAKQPKKKRSRSKKCKSVNNLDLGNMEENKPSDLANGNEQKDPESVNRLDPGKEKESIPSNLVSGNEQPDSNTAPAKKPKKKKRKLANNFDSVNNMEEKMPSTNVLSQGNKSGLIEEKPSIPSDQ.

Residues 15 to 78 (EATGAWATKV…ERRLSLFKGD (64 aa)) form the R3H domain. Residues 227 to 396 (ISAVESNQVV…FGGCPVVRVP (170 aa)) form the Helicase ATP-binding domain. 240 to 247 (GETGCGKT) is a binding site for ATP. The DEIH box motif lies at 343-346 (DEIH). In terms of domain architecture, Helicase C-terminal spans 561-735 (LIVKLMKKIC…ELCLQVKMLD (175 aa)). 3 disordered regions span residues 1137–1165 (ATSP…MGSK), 1177–1223 (MEES…SLNN), and 1260–1576 (DMGN…PSDQ). The segment covering 1281–1301 (PNSANSMDLGNMEENTPSDLA) has biased composition (polar residues). The span at 1305 to 1319 (KKKEPKSVSKLDLGS) shows a compositional bias: basic and acidic residues. The PH1 signature appears at 1349-1360 (KQPEKKRSRSKK). A compositionally biased stretch (basic residues) spans 1352-1363 (EKKRSRSKKRKS). Over residues 1381-1412 (ANENEQTEPKSANNLDLGNMKENTPSDLANEN) the composition is skewed to polar residues. The PH2 motif lies at 1454–1465 (KQPKKKRSRSKK). The segment covering 1455-1467 (QPKKKRSRSKKCK) has biased composition (basic residues). Positions 1490–1508 (EQKDPESVNRLDPGKEKES) are enriched in basic and acidic residues. The segment covering 1509–1524 (IPSNLVSGNEQPDSNT) has biased composition (polar residues). Basic residues predominate over residues 1528-1537 (KKPKKKKRKL). A Nuclear localization signal motif is present at residues 1530–1537 (PKKKKRKL). Residues 1540–1562 (NFDSVNNMEEKMPSTNVLSQGNK) show a composition bias toward polar residues.

Belongs to the DExH box helicase family. In terms of assembly, homodimer.

The protein localises to the nucleus. It carries out the reaction ATP + H2O = ADP + phosphate + H(+). May function as an ATP-dependent RNA/DNA helicase. Binds DNA in vitro in a non-specific manner. This is DExH-box ATP-dependent RNA helicase DExH2 from Arabidopsis thaliana (Mouse-ear cress).